The following is a 640-amino-acid chain: Protein SPT10 (640 aa).

Residues 1–30 form a disordered region; sequence MLNQHTSSVPDDEHLQMAHQNSSSEVRNEA. Residues 121–259 form the N-acetyltransferase domain; the sequence is LDYSMDTEAD…AGILKGFDVP (139 aa). The disordered stretch occupies residues 534–565; sequence PHLTNNESQDHANPVNRDERDMNHSVPDLDRN. The segment covering 549-565 has biased composition (basic and acidic residues); the sequence is NRDERDMNHSVPDLDRN.

Required for normal transcription at a number of loci in yeast. Affects transcription at Ty1 elements, at PHO5, STE6 and ADH2. The chain is Protein SPT10 (SPT10) from Saccharomyces cerevisiae (strain ATCC 204508 / S288c) (Baker's yeast).